Consider the following 101-residue polypeptide: Small ribosomal subunit protein uS14 (101 aa).

This sequence belongs to the universal ribosomal protein uS14 family. Part of the 30S ribosomal subunit. Contacts proteins S3 and S10.

Its function is as follows. Binds 16S rRNA, required for the assembly of 30S particles and may also be responsible for determining the conformation of the 16S rRNA at the A site. This is Small ribosomal subunit protein uS14 from Gluconobacter oxydans (strain 621H) (Gluconobacter suboxydans).